A 230-amino-acid chain; its full sequence is Ion-translocating oxidoreductase complex subunit E (230 aa).

5 consecutive transmembrane segments (helical) span residues 39-59 (LGLG…VSLI), 69-89 (IPVF…LMNA), 93-113 (GLYL…IIIG), 125-145 (LPAA…LVVL), and 182-202 (SFLL…LIAL).

It belongs to the NqrDE/RnfAE family. As to quaternary structure, the complex is composed of six subunits: RnfA, RnfB, RnfC, RnfD, RnfE and RnfG.

It localises to the cell inner membrane. Its function is as follows. Part of a membrane-bound complex that couples electron transfer with translocation of ions across the membrane. In Vibrio vulnificus (strain YJ016), this protein is Ion-translocating oxidoreductase complex subunit E.